Reading from the N-terminus, the 364-residue chain is mRNA decay activator protein ZFP36L2-B (364 aa).

Residues 102–111 (SFSENGERSQ) are compositionally biased toward basic and acidic residues. The interval 102 to 129 (SFSENGERSQHLLHLQQQQQQQKAGAQV) is disordered. Over residues 113–123 (LLHLQQQQQQQ) the composition is skewed to low complexity. An RNA-binding motif is present at residues 133–138 (RYKTEL). 2 consecutive C3H1-type zinc fingers follow at residues 133–161 (RYKT…HGFH) and 171–199 (KYKT…HNAE). Residues 150-191 (YGEKCQFAHGFHELRSLTRHPKYKTELCRTFHTIGFCPYGPR) are RNA-binding. The segment at 308–350 (SESPVFDAPPSPPDSLSDRDSYLSGSLSSGSLSGSDSPTLDSN) is disordered. Residues 329–348 (YLSGSLSSGSLSGSDSPTLD) show a composition bias toward low complexity.

In terms of processing, phosphorylated. Remains unlocalized in the egg and early embryo. From stage 21 (late neurula), expressed around the pronephros in the anterior crests, pharyngeal arch, hindbrain, mesodermal tissues around the pronephros and tail-bud. This expression pattern is maintained up to the tadpole stage.

It is found in the nucleus. It localises to the cytoplasm. Zinc-finger RNA-binding protein that destabilizes several cytoplasmic AU-rich element (ARE)-containing mRNA transcripts by promoting their poly(A) tail removal or deadenylation, and hence provide a mechanism for attenuating protein synthesis. Acts as a 3'-untranslated region (UTR) ARE mRNA-binding adapter protein to communicate signaling events to the mRNA decay machinery. Functions by recruiting the CCR4-NOT deadenylase complex and probably other components of the cytoplasmic RNA decay machinery to the bound ARE-containing mRNAs, and hence promotes ARE-mediated mRNA deadenylation and decay processes. Binds to 3'-UTR ARE of numerous mRNAs. Also induces the degradation of ARE-containing mRNAs even in absence of poly(A) tail. Required for tubulogenesis during pronephros development. The polypeptide is mRNA decay activator protein ZFP36L2-B (zfp36l2-B) (Xenopus laevis (African clawed frog)).